The sequence spans 503 residues: Activin receptor type-1-like (503 aa).

Residues Met1–Gly21 form the signal peptide. Residues Asp22 to Gln118 are Extracellular-facing. 3 disulfide bridges follow: Cys34-Cys51, Cys36-Cys41, and Cys46-Cys69. Residues His73 to Leu76 form a mediates specificity for BMP ligand region. 2 cysteine pairs are disulfide-bonded: Cys77/Cys89 and Cys90/Cys95. Asn98 carries an N-linked (GlcNAc...) asparagine glycan. The helical transmembrane segment at Leu119–Trp141 threads the bilayer. The Cytoplasmic segment spans residues His142–Gln503. Residues Ser155, Ser160, and Ser161 each carry the phosphoserine modification. The GS domain occupies Ser172–Gln201. One can recognise a Protein kinase domain in the interval Val202–Ile492. Residues Val208 to Val216 and Lys229 each bind ATP. Catalysis depends on Asp330, which acts as the Proton acceptor.

Belongs to the protein kinase superfamily. TKL Ser/Thr protein kinase family. TGFB receptor subfamily. In terms of assembly, interacts with TSC22D1/TSC-22. Requires Mg(2+) as cofactor. Mn(2+) is required as a cofactor.

It localises to the cell membrane. The enzyme catalyses L-threonyl-[receptor-protein] + ATP = O-phospho-L-threonyl-[receptor-protein] + ADP + H(+). It catalyses the reaction L-seryl-[receptor-protein] + ATP = O-phospho-L-seryl-[receptor-protein] + ADP + H(+). Its function is as follows. Type I receptor for TGF-beta family ligands BMP9/GDF2 and BMP10 and important regulator of normal blood vessel development. On ligand binding, forms a receptor complex consisting of two type II and two type I transmembrane serine/threonine kinases. Type II receptors phosphorylate and activate type I receptors which autophosphorylate, then bind and activate SMAD transcriptional regulators. May bind activin as well. The sequence is that of Activin receptor type-1-like (ACVRL1) from Pongo abelii (Sumatran orangutan).